We begin with the raw amino-acid sequence, 158 residues long: FUN14 domain-containing protein 1 (158 aa).

The YXXL signature appears at 21 to 24 (YEVV). The next 2 helical transmembrane spans lie at 51-70 (YSVTTQLVMGGLTGWCAGYL) and 77-98 (IAATAVGGGFLLLQIANHSGYV).

Belongs to the FUN14 family.

The protein resides in the mitochondrion outer membrane. Acts as an activator of hypoxia-induced mitophagy, an important mechanism for mitochondrial quality control. In Tetraodon nigroviridis (Spotted green pufferfish), this protein is FUN14 domain-containing protein 1 (fundc1).